Reading from the N-terminus, the 95-residue chain is Integration host factor subunit beta (95 aa).

It belongs to the bacterial histone-like protein family. In terms of assembly, heterodimer of an alpha and a beta chain.

Its function is as follows. This protein is one of the two subunits of integration host factor, a specific DNA-binding protein that functions in genetic recombination as well as in transcriptional and translational control. The polypeptide is Integration host factor subunit beta (Psychromonas ingrahamii (strain DSM 17664 / CCUG 51855 / 37)).